Reading from the N-terminus, the 265-residue chain is Histone H1 (265 aa).

Over residues 1–27 (MATEEPIVAVETVPEPIVTEPTTITEP) the composition is skewed to low complexity. Disordered stretches follow at residues 1–66 (MATE…PTYE), 131–226 (AAKK…TTPG), and 242–265 (VKSV…GGRK). Positions 29 to 42 (VPEKEEPKAEVEKT) are enriched in basic and acidic residues. Over residues 43 to 55 (KKAKGSKPKKASK) the composition is skewed to basic residues. An H15 domain is found at 61–130 (SHPTYEEMIK…KVKGSFKLSA (70 aa)). Basic residues predominate over residues 140 to 171 (PKAKTAAKAKSVKAKPAAKPKAKAVVKPKVAS). The segment covering 186 to 202 (KPKTVAAKTKPTAAKPK) has biased composition (low complexity). Over residues 203–215 (AVVKPKSKVKPAK) the composition is skewed to basic residues. Residues 216 to 226 (VAKTSVKTTPG) are compositionally biased toward low complexity.

This sequence belongs to the histone H1/H5 family.

Its subcellular location is the nucleus. It localises to the chromosome. Its function is as follows. Histones H1 are necessary for the condensation of nucleosome chains into higher-order structures. The sequence is that of Histone H1 from Pisum sativum (Garden pea).